The chain runs to 575 residues: Arginine--tRNA ligase (575 aa).

The 'HIGH' region motif lies at 130 to 140 (ANPTGPMHVGH).

Belongs to the class-I aminoacyl-tRNA synthetase family. Monomer.

Its subcellular location is the cytoplasm. The catalysed reaction is tRNA(Arg) + L-arginine + ATP = L-arginyl-tRNA(Arg) + AMP + diphosphate. The polypeptide is Arginine--tRNA ligase (Magnetococcus marinus (strain ATCC BAA-1437 / JCM 17883 / MC-1)).